Consider the following 66-residue polypeptide: uncharacterized protein (66 aa).

2 consecutive transmembrane segments (helical) span residues 5-25 (ALIV…PLVN) and 30-50 (IMFG…VTPL).

The protein localises to the cell membrane. This is an uncharacterized protein from Bacillus subtilis (strain 168).